The following is a 453-amino-acid chain: tRNA-2-methylthio-N(6)-dimethylallyladenosine synthase (453 aa).

An MTTase N-terminal domain is found at 4-118 (KKFYIENYGC…IPNLINNFFK (115 aa)). [4Fe-4S] cluster is bound by residues C13, C49, C83, C156, C160, and C163. Positions 142–388 (EEKKITAFVT…NLQKTHSYYR (247 aa)) constitute a Radical SAM core domain. Residues 390–453 (RKYIGSIQDI…SATLVGDIYV (64 aa)) form the TRAM domain.

The protein belongs to the methylthiotransferase family. MiaB subfamily. In terms of assembly, monomer. [4Fe-4S] cluster is required as a cofactor.

The protein localises to the cytoplasm. The enzyme catalyses N(6)-dimethylallyladenosine(37) in tRNA + (sulfur carrier)-SH + AH2 + 2 S-adenosyl-L-methionine = 2-methylsulfanyl-N(6)-dimethylallyladenosine(37) in tRNA + (sulfur carrier)-H + 5'-deoxyadenosine + L-methionine + A + S-adenosyl-L-homocysteine + 2 H(+). Catalyzes the methylthiolation of N6-(dimethylallyl)adenosine (i(6)A), leading to the formation of 2-methylthio-N6-(dimethylallyl)adenosine (ms(2)i(6)A) at position 37 in tRNAs that read codons beginning with uridine. In Karelsulcia muelleri (strain GWSS) (Sulcia muelleri), this protein is tRNA-2-methylthio-N(6)-dimethylallyladenosine synthase.